Here is a 291-residue protein sequence, read N- to C-terminus: Acetyl-coenzyme A carboxylase carboxyl transferase subunit beta (291 aa).

Residues 34–291 (MWTKCSNCNN…LILHGVNKYE (258 aa)) enclose the CoA carboxyltransferase N-terminal domain. Positions 38, 41, 57, and 60 each coordinate Zn(2+). The C4-type zinc finger occupies 38–60 (CSNCNNMIYYEDLENNKYVCTKC).

It belongs to the AccD/PCCB family. In terms of assembly, acetyl-CoA carboxylase is a heterohexamer composed of biotin carboxyl carrier protein (AccB), biotin carboxylase (AccC) and two subunits each of ACCase subunit alpha (AccA) and ACCase subunit beta (AccD). Zn(2+) is required as a cofactor.

Its subcellular location is the cytoplasm. It carries out the reaction N(6)-carboxybiotinyl-L-lysyl-[protein] + acetyl-CoA = N(6)-biotinyl-L-lysyl-[protein] + malonyl-CoA. The protein operates within lipid metabolism; malonyl-CoA biosynthesis; malonyl-CoA from acetyl-CoA: step 1/1. Its function is as follows. Component of the acetyl coenzyme A carboxylase (ACC) complex. Biotin carboxylase (BC) catalyzes the carboxylation of biotin on its carrier protein (BCCP) and then the CO(2) group is transferred by the transcarboxylase to acetyl-CoA to form malonyl-CoA. In Clostridium botulinum (strain Eklund 17B / Type B), this protein is Acetyl-coenzyme A carboxylase carboxyl transferase subunit beta.